A 226-amino-acid polypeptide reads, in one-letter code: UPF0111 protein PH0637 (226 aa).

It belongs to the UPF0111 family.

This Pyrococcus horikoshii (strain ATCC 700860 / DSM 12428 / JCM 9974 / NBRC 100139 / OT-3) protein is UPF0111 protein PH0637.